We begin with the raw amino-acid sequence, 40 residues long: Large ribosomal subunit protein bL36 (40 aa).

Belongs to the bacterial ribosomal protein bL36 family.

This is Large ribosomal subunit protein bL36 from Corynebacterium diphtheriae (strain ATCC 700971 / NCTC 13129 / Biotype gravis).